The primary structure comprises 330 residues: Serine/threonine-protein phosphatase beta isoform (330 aa).

Positions 63, 65, 91, and 123 each coordinate Mn(2+). Histidine 124 functions as the Proton donor in the catalytic mechanism. Histidine 172 and histidine 247 together coordinate Mn(2+). Residues 308 to 319 show a composition bias toward polar residues; the sequence is GMNSSRPTTPQR. Residues 308–330 form a disordered region; it reads GMNSSRPTTPQRSAPMLATNKKK. Residues threonine 315 and threonine 316 each carry the phosphothreonine modification.

It belongs to the PPP phosphatase family. PP-1 subfamily. As to quaternary structure, interacts with Nop17l. Interacts with uri; uri inhibits flw phosphatase activity. Mn(2+) is required as a cofactor.

The catalysed reaction is O-phospho-L-seryl-[protein] + H2O = L-seryl-[protein] + phosphate. The enzyme catalyses O-phospho-L-threonyl-[protein] + H2O = L-threonyl-[protein] + phosphate. In terms of biological role, required for cell adhesion in non-muscle tissues and in maintenance of muscle attachment. Vital for larval development. The polypeptide is Serine/threonine-protein phosphatase beta isoform (flw) (Drosophila melanogaster (Fruit fly)).